Reading from the N-terminus, the 201-residue chain is Probable chemoreceptor glutamine deamidase CheD (201 aa).

It belongs to the CheD family.

It carries out the reaction L-glutaminyl-[protein] + H2O = L-glutamyl-[protein] + NH4(+). Functionally, probably deamidates glutamine residues to glutamate on methyl-accepting chemotaxis receptors (MCPs), playing an important role in chemotaxis. The polypeptide is Probable chemoreceptor glutamine deamidase CheD (Chlorobium luteolum (strain DSM 273 / BCRC 81028 / 2530) (Pelodictyon luteolum)).